The following is a 172-amino-acid chain: Large ribosomal subunit protein uL10 (172 aa).

It belongs to the universal ribosomal protein uL10 family. Part of the ribosomal stalk of the 50S ribosomal subunit. The N-terminus interacts with L11 and the large rRNA to form the base of the stalk. The C-terminus forms an elongated spine to which L12 dimers bind in a sequential fashion forming a multimeric L10(L12)X complex.

In terms of biological role, forms part of the ribosomal stalk, playing a central role in the interaction of the ribosome with GTP-bound translation factors. In Chlorobium chlorochromatii (strain CaD3), this protein is Large ribosomal subunit protein uL10.